A 162-amino-acid polypeptide reads, in one-letter code: ATP synthase subunit b (162 aa).

Residues 6–25 (TLFTLVTFLVLMLAVGKVAW) traverse the membrane as a helical segment.

Belongs to the ATPase B chain family. As to quaternary structure, F-type ATPases have 2 components, F(1) - the catalytic core - and F(0) - the membrane proton channel. F(1) has five subunits: alpha(3), beta(3), gamma(1), delta(1), epsilon(1). F(0) has three main subunits: a(1), b(2) and c(10-14). The alpha and beta chains form an alternating ring which encloses part of the gamma chain. F(1) is attached to F(0) by a central stalk formed by the gamma and epsilon chains, while a peripheral stalk is formed by the delta and b chains.

It localises to the cell membrane. Its function is as follows. F(1)F(0) ATP synthase produces ATP from ADP in the presence of a proton or sodium gradient. F-type ATPases consist of two structural domains, F(1) containing the extramembraneous catalytic core and F(0) containing the membrane proton channel, linked together by a central stalk and a peripheral stalk. During catalysis, ATP synthesis in the catalytic domain of F(1) is coupled via a rotary mechanism of the central stalk subunits to proton translocation. In terms of biological role, component of the F(0) channel, it forms part of the peripheral stalk, linking F(1) to F(0). The protein is ATP synthase subunit b of Lacticaseibacillus casei (strain BL23) (Lactobacillus casei).